An 892-amino-acid chain; its full sequence is Zinc finger protein 473 homolog (892 aa).

In terms of domain architecture, KRAB spans 23–101 (ETLKDLAMDF…TKSSPLQSGF (79 aa)). Composition is skewed to polar residues over residues 66 to 76 (DTSQPSLTSQP) and 84 to 97 (ATSTEVPETKSSPL). Disordered regions lie at residues 66–97 (DTSQPSLTSQPDVREELEATSTEVPETKSSPL) and 134–203 (GDPE…DSVQ). 2 stretches are compositionally biased toward basic and acidic residues: residues 138–156 (SLPRPDISDKESPADHQSP) and 190–203 (KESRSDLSQEDSVQ). C2H2-type zinc fingers lie at residues 209–231 (YKCSECGESFSQSHHLIQHWVLH) and 265–287 (YTCQECGKRFSQNVYLQWHQKIH). A compositionally biased stretch (polar residues) spans 297-308 (SDSNLEGLSRSP). The disordered stretch occupies residues 297–370 (SDSNLEGLSR…HPKPLRHQKT (74 aa)). Basic and acidic residues-rich tracts occupy residues 313 to 323 (GKQRLSKDTDS) and 332 to 353 (QDQEKPPTGESRDQENLHESQP). C2H2-type zinc fingers lie at residues 377-399 (FRCKKCGETFSGAFHLAKHQRAH), 404-426 (YKCASCPAVFNLSKHCFQHRKSH), 432-454 (CECQGCRKSFNWRSSLIKHQAIH), 460-482 (YKCDECGKAFNHSSTLKIHQRIH), 488-510 (HKCSECGKAFCRRTDLTEHQRVH), 516-538 (HQCPVCARTFNRPSHLVRHRLRH), 544-566 (FGCAKCKETFIYKEQLERHNKIH), and 572-594 (YECKQCGEHFICRSTLNCHLSIH). Lys476 is covalently cross-linked (Glycyl lysine isopeptide (Lys-Gly) (interchain with G-Cter in SUMO2)). Lys602 is covalently cross-linked (Glycyl lysine isopeptide (Lys-Gly) (interchain with G-Cter in SUMO2)). Residues 697–719 (FKCDIYNRAFKQRAHLSKHQLIH) form a C2H2-type 11; degenerate zinc finger. 6 C2H2-type zinc fingers span residues 725–747 (FKCNECDRAFKQSNYLIQHQKTH), 753–775 (FECSECGKTFHQRSCLSKHQKIH), 781–803 (FKCGDCGKAFISGAQLIRHQRIH), 809–831 (YVCQECGKTFSQSSCLTLHLRIH), 837–859 (YTCGTCGKAFAQRANQRKHERIH), and 865–887 (YACGLCGKAFGLRTHLQQHQRIH).

Belongs to the krueppel C2H2-type zinc-finger protein family. Interacts with the SLBP/pre-mRNA complex but not with SLBP alone. Interacts with LSM11 in a U7 snRNP-dependent manner.

The protein resides in the nucleus. Its function is as follows. Involved in histone 3'-end pre-mRNA processing by associating with U7 snRNP and interacting with SLBP/pre-mRNA complex. Increases histone 3'-end pre-mRNA processing but has no effect on U7 snRNP levels, when overexpressed. Required for cell cycle progression from G1 to S phases. The chain is Zinc finger protein 473 homolog (Znf473) from Mus musculus (Mouse).